The primary structure comprises 248 residues: MRSSGRKKEQIRPVKITRNFTKYAEGSVLIEVGDTKVLCTASIEEKVPPFLKGSGEGWITAEYNMLPRSTQSRKQRDINKLKIDGRTMEIQRLIGRALRSAVDMKALGEKTIWIDCDVLQADGGTRTTSITGSFVALVDAVNKLHQKKPFNVYPIRHFVSAVSVGIVGEEKILDLCYEEDHVAKVDMNVVMTEEGEFIEIQGTGEAGPFSRKELDELLNLAEKGAKQMIQAQKDALKTDSLWIGTGRE.

Phosphate is bound by residues arginine 86 and 124-126 (GTR).

It belongs to the RNase PH family. As to quaternary structure, homohexameric ring arranged as a trimer of dimers.

It catalyses the reaction tRNA(n+1) + phosphate = tRNA(n) + a ribonucleoside 5'-diphosphate. Its function is as follows. Phosphorolytic 3'-5' exoribonuclease that plays an important role in tRNA 3'-end maturation. Removes nucleotide residues following the 3'-CCA terminus of tRNAs; can also add nucleotides to the ends of RNA molecules by using nucleoside diphosphates as substrates, but this may not be physiologically important. Probably plays a role in initiation of 16S rRNA degradation (leading to ribosome degradation) during starvation. This Clostridium perfringens (strain 13 / Type A) protein is Ribonuclease PH.